A 152-amino-acid polypeptide reads, in one-letter code: Ribonuclease H (152 aa).

Residues 1–142 enclose the RNase H type-1 domain; it reads MDSKVVIYTD…ADKLAVQGRE (142 aa). Residues D10, E48, D70, and D134 each coordinate Mg(2+).

Belongs to the RNase H family. Monomer. The cofactor is Mg(2+).

It is found in the cytoplasm. It carries out the reaction Endonucleolytic cleavage to 5'-phosphomonoester.. Its function is as follows. Endonuclease that specifically degrades the RNA of RNA-DNA hybrids. The protein is Ribonuclease H of Rickettsia felis (strain ATCC VR-1525 / URRWXCal2) (Rickettsia azadi).